The sequence spans 153 residues: UPF0235 protein C15orf40 (153 aa).

Over residues M1 to R12 the composition is skewed to basic residues. The segment at M1–V55 is disordered. Residue S116 is modified to Phosphoserine.

Belongs to the UPF0235 family.

This is UPF0235 protein C15orf40 (C15orf40) from Homo sapiens (Human).